A 415-amino-acid chain; its full sequence is Phosphoglycerate kinase (415 aa).

Residues 24 to 26, arginine 39, 62 to 65, arginine 121, and arginine 161 contribute to the substrate site; these read DLN and HLGR. ATP is bound by residues lysine 211, glycine 307, glutamate 338, and 367 to 370; that span reads GGDS.

It belongs to the phosphoglycerate kinase family. In terms of assembly, monomer.

The protein localises to the cytoplasm. It catalyses the reaction (2R)-3-phosphoglycerate + ATP = (2R)-3-phospho-glyceroyl phosphate + ADP. It participates in carbohydrate degradation; glycolysis; pyruvate from D-glyceraldehyde 3-phosphate: step 2/5. The polypeptide is Phosphoglycerate kinase (Micrococcus luteus (strain ATCC 4698 / DSM 20030 / JCM 1464 / CCM 169 / CCUG 5858 / IAM 1056 / NBRC 3333 / NCIMB 9278 / NCTC 2665 / VKM Ac-2230) (Micrococcus lysodeikticus)).